A 284-amino-acid polypeptide reads, in one-letter code: Bifunctional protein FolD (284 aa).

NADP(+) contacts are provided by residues 165 to 167, serine 190, and valine 231; that span reads GRS.

The protein belongs to the tetrahydrofolate dehydrogenase/cyclohydrolase family. As to quaternary structure, homodimer.

The catalysed reaction is (6R)-5,10-methylene-5,6,7,8-tetrahydrofolate + NADP(+) = (6R)-5,10-methenyltetrahydrofolate + NADPH. It carries out the reaction (6R)-5,10-methenyltetrahydrofolate + H2O = (6R)-10-formyltetrahydrofolate + H(+). Its pathway is one-carbon metabolism; tetrahydrofolate interconversion. Functionally, catalyzes the oxidation of 5,10-methylenetetrahydrofolate to 5,10-methenyltetrahydrofolate and then the hydrolysis of 5,10-methenyltetrahydrofolate to 10-formyltetrahydrofolate. The protein is Bifunctional protein FolD of Bacillus licheniformis (strain ATCC 14580 / DSM 13 / JCM 2505 / CCUG 7422 / NBRC 12200 / NCIMB 9375 / NCTC 10341 / NRRL NRS-1264 / Gibson 46).